The chain runs to 409 residues: Threonine dehydratase-like protein AKTS1-1 (409 aa).

Residues 1-21 (MADYLRQVMPENDSDSEALPR) are disordered. At lysine 111 the chain carries N6-(pyridoxal phosphate)lysine. Pyridoxal 5'-phosphate is bound by residues asparagine 138, 239 to 243 (GEGSL), and serine 368.

The protein belongs to the serine/threonine dehydratase family. Requires pyridoxal 5'-phosphate as cofactor.

It functions in the pathway mycotoxin biosynthesis. Threonine dehydratase-like protein; part of the gene clusters that mediate the biosynthesis of the host-selective toxins (HSTs) AK-toxins responsible for Japanese pear black spot disease by the Japanese pear pathotype. AK-toxins are esters of 9,10-epoxy 8-hydroxy 9-methyldecatrienoic acid (EDA). On cellular level, AK-toxins affect plasma membrane of susceptible cells and cause a sudden increase in loss of K(+) after a few minutes of toxin treatment. The acyl-CoA ligase AKT1, the hydrolase AKT2 and enoyl-CoA hydratase AKT3 are all involved in the biosynthesis of the AK-, AF- and ACT-toxin common 9,10-epoxy-8-hydroxy-9-methyl-decatrienoic acid (EDA) structural moiety. Part of the EDA biosynthesis occurs in the peroxisome since these 3 enzymes are localized in peroxisomes. The exact roles of the 3 enzymes, as well as of additional AK-toxin clusters enzymes, including AKT4, AKT6 and AKTS1, have still to be elucidated. The Cytochrome P450 monooxygenase AKT7 on the other side functions to limit production of EDA and AK-toxin, probably via the catalysis of a side reaction of EDA or its precursor. This chain is Threonine dehydratase-like protein AKTS1-1, found in Alternaria alternata (Alternaria rot fungus).